Consider the following 217-residue polypeptide: MSFLLHQSRFFTTVNHLQDLPATSQPEICFAGRSNAGKSTAINILCNQKRLAFASKTPGRTQHINYFSVGNADEPTAHLVDLPGYGYAEVPGAAKAHWEALLSAYLQSRSQLRGMILMMDSRRPLTDLDRRMIEWFVPTGKPIHTLLTKCDKLTRQESVNALRATQKGLAEYRAAGYRGELTAQLFSALKRIGIDEAHALIESWLIPEAKGETDTPQ.

The EngB-type G domain maps to 24–207 (SQPEICFAGR…HALIESWLIP (184 aa)). Residues 32-39 (GRSNAGKS), 59-63 (GRTQH), 81-84 (DLPG), 148-151 (TKCD), and 185-188 (LFSA) each bind GTP. Residues S39 and T61 each contribute to the Mg(2+) site.

This sequence belongs to the TRAFAC class TrmE-Era-EngA-EngB-Septin-like GTPase superfamily. EngB GTPase family. Mg(2+) serves as cofactor.

In terms of biological role, necessary for normal cell division and for the maintenance of normal septation. The sequence is that of Probable GTP-binding protein EngB from Paraburkholderia xenovorans (strain LB400).